The following is a 375-amino-acid chain: MAQLCVALVAGEASGDILGSGLMRALKARHPDVRFIGVGGPLMEAEGLQSYFPMERLAVMGLVEVLGRLRELLKRRKLLIQTLIDEKPDVFIGIDAPDFTLNIELKLRQAGIKTVHYVSPSVWAWRQKRVLKIREGCDLMLTLLPFEARFYEEQGVPVRFVGHPLADTIPLEADRSVARAALGLGEGPIVALMPGSRGGEVGRLGALFLDAAEHLCQQVPGVRFVLPCANAARRAQVEHMLEGRQLPLTLLDGQSHQALAACDAVLIASGTATLEALLYKRPMVVAYRLAPLTYWILKRLVKSPYVSLPNLLAQRELVPELLQDQATSQALANTLAPLVRDGSQQTERFDEIHRTLRRDASNQAAEAVLALLKDR.

The protein belongs to the LpxB family.

The catalysed reaction is a lipid X + a UDP-2-N,3-O-bis[(3R)-3-hydroxyacyl]-alpha-D-glucosamine = a lipid A disaccharide + UDP + H(+). It functions in the pathway bacterial outer membrane biogenesis; LPS lipid A biosynthesis. In terms of biological role, condensation of UDP-2,3-diacylglucosamine and 2,3-diacylglucosamine-1-phosphate to form lipid A disaccharide, a precursor of lipid A, a phosphorylated glycolipid that anchors the lipopolysaccharide to the outer membrane of the cell. This is Lipid-A-disaccharide synthase from Pseudomonas putida (strain GB-1).